The sequence spans 369 residues: Tetraacyldisaccharide 4'-kinase (369 aa).

Position 68–75 (68–75 (VVGGTGKT)) interacts with ATP.

Belongs to the LpxK family.

It catalyses the reaction a lipid A disaccharide + ATP = a lipid IVA + ADP + H(+). Its pathway is glycolipid biosynthesis; lipid IV(A) biosynthesis; lipid IV(A) from (3R)-3-hydroxytetradecanoyl-[acyl-carrier-protein] and UDP-N-acetyl-alpha-D-glucosamine: step 6/6. Transfers the gamma-phosphate of ATP to the 4'-position of a tetraacyldisaccharide 1-phosphate intermediate (termed DS-1-P) to form tetraacyldisaccharide 1,4'-bis-phosphate (lipid IVA). In Chlamydia muridarum (strain MoPn / Nigg), this protein is Tetraacyldisaccharide 4'-kinase.